The primary structure comprises 357 residues: 3-dehydroquinate synthase (357 aa).

Residues 69–74 (DGEQFK), 103–107 (GVVGD), 127–128 (TT), Lys140, Lys149, and 167–170 (CLQT) each bind NAD(+). Residues Glu182, His245, and His262 each coordinate Zn(2+).

The protein belongs to the sugar phosphate cyclases superfamily. Dehydroquinate synthase family. Requires Co(2+) as cofactor. Zn(2+) serves as cofactor. The cofactor is NAD(+).

It localises to the cytoplasm. The enzyme catalyses 7-phospho-2-dehydro-3-deoxy-D-arabino-heptonate = 3-dehydroquinate + phosphate. Its pathway is metabolic intermediate biosynthesis; chorismate biosynthesis; chorismate from D-erythrose 4-phosphate and phosphoenolpyruvate: step 2/7. Functionally, catalyzes the conversion of 3-deoxy-D-arabino-heptulosonate 7-phosphate (DAHP) to dehydroquinate (DHQ). The polypeptide is 3-dehydroquinate synthase (Idiomarina loihiensis (strain ATCC BAA-735 / DSM 15497 / L2-TR)).